A 181-amino-acid polypeptide reads, in one-letter code: Shikimate kinase (181 aa).

ATP is bound at residue Gly17 to Thr22. Thr21 serves as a coordination point for Mg(2+). Residues Asp39, Arg63, and Gly85 each coordinate substrate. Arg122 provides a ligand contact to ATP. Arg141 is a substrate binding site.

Belongs to the shikimate kinase family. As to quaternary structure, monomer. Mg(2+) serves as cofactor.

It is found in the cytoplasm. The catalysed reaction is shikimate + ATP = 3-phosphoshikimate + ADP + H(+). Its pathway is metabolic intermediate biosynthesis; chorismate biosynthesis; chorismate from D-erythrose 4-phosphate and phosphoenolpyruvate: step 5/7. Functionally, catalyzes the specific phosphorylation of the 3-hydroxyl group of shikimic acid using ATP as a cosubstrate. The protein is Shikimate kinase of Nostoc sp. (strain PCC 7120 / SAG 25.82 / UTEX 2576).